We begin with the raw amino-acid sequence, 234 residues long: Ribosome maturation protein SDO1 homolog (234 aa).

This sequence belongs to the SDO1/SBDS family.

This chain is Ribosome maturation protein SDO1 homolog, found in Archaeoglobus fulgidus (strain ATCC 49558 / DSM 4304 / JCM 9628 / NBRC 100126 / VC-16).